A 60-amino-acid chain; its full sequence is UPF0434 protein PC1_1771 (60 aa).

It belongs to the UPF0434 family.

In Pectobacterium carotovorum subsp. carotovorum (strain PC1), this protein is UPF0434 protein PC1_1771.